The primary structure comprises 229 residues: Casparian strip membrane protein 1 (229 aa).

The Cytoplasmic segment spans residues 1-67; it reads MSTSEAGAAA…FRRADRGSRC (67 aa). Residues 68-88 form a helical membrane-spanning segment; sequence VALLDFVLRVAAFGPALAAAI. Residues 89-115 are Extracellular-facing; the sequence is ATGTSDETLSVFTQFFQFHARFDDFPA. Residues 116 to 136 traverse the membrane as a helical segment; the sequence is LLFFMVANAIAAGYLVLSLPF. The Cytoplasmic portion of the chain corresponds to 137–157; that stretch reads SAVIVLRPQAIGLRHLLLVCD. Residues 158 to 178 form a helical membrane-spanning segment; sequence MIIAALLTAAAAAAAAIVDLA. Residues 179-205 are Extracellular-facing; the sequence is HSGNLRANWVPICMQFHGFCQRTSGAV. A helical transmembrane segment spans residues 206 to 226; sequence VGSFLAVLVLLFLVILAAFAI. The Cytoplasmic segment spans residues 227 to 229; it reads RKR.

Belongs to the Casparian strip membrane proteins (CASP) family. In terms of assembly, homodimer and heterodimers.

The protein localises to the cell membrane. In terms of biological role, regulates membrane-cell wall junctions and localized cell wall deposition. Required for establishment of the Casparian strip membrane domain (CSD) and the subsequent formation of Casparian strips, a cell wall modification of the root endodermis that determines an apoplastic barrier between the intraorganismal apoplasm and the extraorganismal apoplasm and prevents lateral diffusion. The polypeptide is Casparian strip membrane protein 1 (Sorghum bicolor (Sorghum)).